The following is a 114-amino-acid chain: C-X-C motif chemokine 6 (114 aa).

Positions 1–37 are cleaved as a signal peptide; the sequence is MSLPSSRAARVPGPSGSLCALLALLLLLTPPGPLASA. Disulfide bonds link Cys49-Cys75 and Cys51-Cys91.

This sequence belongs to the intercrine alpha (chemokine CxC) family.

The protein localises to the secreted. Functionally, chemotactic for neutrophil granulocytes. Signals through binding and activation of its receptors (CXCR1 and CXCR2). In addition to its chemotactic and angiogenic properties, it has strong antibacterial activity against Gram-positive and Gram-negative bacteria (90-fold-higher when compared to CXCL5 and CXCL7). The chain is C-X-C motif chemokine 6 (CXCL6) from Homo sapiens (Human).